The primary structure comprises 305 residues: 2-oxoacid:ferredoxin oxidoreductase subunit beta (305 aa).

[4Fe-4S] cluster contacts are provided by cysteine 12, cysteine 15, and cysteine 46. Residues 44–47 (IGCS) and histidine 65 each bind thiamine diphosphate. Residue aspartate 90 participates in Mg(2+) binding. Thiamine diphosphate is bound at residue 91–92 (GD). Mg(2+)-binding residues include asparagine 118 and valine 120. Position 122 to 123 (122 to 123 (GL)) interacts with thiamine diphosphate. Residue cysteine 197 coordinates [4Fe-4S] cluster.

As to quaternary structure, heterodimer composed of an alpha and a beta subunit. [4Fe-4S] cluster serves as cofactor. It depends on thiamine diphosphate as a cofactor. Mg(2+) is required as a cofactor.

The enzyme catalyses a 2-oxocarboxylate + 2 oxidized [2Fe-2S]-[ferredoxin] + CoA = an acyl-CoA + 2 reduced [2Fe-2S]-[ferredoxin] + CO2 + H(+). Functionally, catalyzes the coenzyme A-dependent oxidative decarboxylation of different 2-oxoacids such as 2-oxoglutarate, pyruvate and 2-oxobutyrate to form their CoA derivatives. The chain is 2-oxoacid:ferredoxin oxidoreductase subunit beta from Saccharolobus solfataricus (Sulfolobus solfataricus).